Here is a 404-residue protein sequence, read N- to C-terminus: 26S proteasome regulatory subunit 6A-B (404 aa).

Position 192 to 199 (192 to 199 (GPPGTGKT)) interacts with ATP.

This sequence belongs to the AAA ATPase family. May form a heterodimer with a related family member.

The protein resides in the cytoplasm. Its subcellular location is the nucleus. Its function is as follows. The 26S proteasome is involved in the ATP-dependent degradation of ubiquitinated proteins. The regulatory (or ATPase) complex confers ATP dependency and substrate specificity to the 26S complex. In Xenopus laevis (African clawed frog), this protein is 26S proteasome regulatory subunit 6A-B (psmc3-b).